The primary structure comprises 317 residues: MTEQMTLRGTLKGHNGWVTQIATTPQFPDMILSASRDKTIIMWKLTRDETNYGIPQRALRGHSHFVSDVVISSDGQFALSGSWDGTLRLWDLTTGTTTRRFVGHTKDVLSVAFSSDNRQIVSGSRDKTIKLWNTLGVCKYTVQDESHSEWVSCVRFSPNSSNPIIVSCGWDKLVKVWNLANCKLKTNHIGHTGYLNTVTVSPDGSLCASGGKDGQAMLWDLNEGKHLYTLDGGDIINALCFSPNRYWLCAATGPSIKIWDLEGKIIVDELKQEVISTSSKAEPPQCTSLAWSADGQTLFAGYTDNLVRVWQVTIGTR.

Met-1 carries the N-acetylmethionine modification. Residue Thr-2 is modified to N-acetylthreonine; in Guanine nucleotide-binding protein subunit beta-2-like 1, N-terminally processed. 2 positions are modified to phosphothreonine: Thr-6 and Thr-10. The WD 1 repeat unit spans residues 13–44 (GHNGWVTQIATTPQFPDMILSASRDKTIIMWK). Tyr-52 carries the post-translational modification Phosphotyrosine; by ABL1. The stretch at 61-91 (GHSHFVSDVVISSDGQFALSGSWDGTLRLWD) is one WD 2 repeat. Thr-96 is subject to Phosphothreonine. WD repeat units follow at residues 103–133 (GHTKDVLSVAFSSDNRQIVSGSRDKTIKLWN) and 146–178 (SHSEWVSCVRFSPNSSNPIIVSCGWDKLVKVWN). Lys-130 is modified (N6-acetyllysine). N6-acetyllysine is present on Lys-183. Residues 190-220 (GHTGYLNTVTVSPDGSLCASGGKDGQAMLWD) form a WD 5 repeat. At Tyr-228 the chain carries Phosphotyrosine. The stretch at 231 to 260 (DGGDIINALCFSPNRYWLCAATGPSIKIWD) is one WD 6 repeat. Position 276 is a phosphoserine (Ser-276). At Thr-277 the chain carries Phosphothreonine. Ser-278 and Ser-279 each carry phosphoserine. One copy of the WD 7 repeat lies at 281-311 (AEPPQCTSLAWSADGQTLFAGYTDNLVRVWQ). Residue Thr-316 is modified to Phosphothreonine.

This sequence belongs to the WD repeat G protein beta family. Ribosomal protein RACK1 subfamily. As to quaternary structure, monomer; also forms homodimers and homooligomers. Interacts with CPNE3. May interact with ABCB4. Component of the small (40S) ribosomal subunit. Interacts with LARP4B. Interacts with LARP4. Interacts with PKD2L1. Binds NHERF1. Forms a ternary complex with TRIM63 and PRKCE. Interacts with HABP4, KRT1 and OTUB1. Interacts with SRC (via SH2 domain); the interaction is enhanced by tyrosine phosphorylation of RACK1. Recruited in a circadian manner into a nuclear complex which also includes BMAL1 and PRKCA. Interacts with AR. Interacts with IGF1R but not with INSR. Interacts with ADAM12. Interacts with CLEC1B (via N-terminal region) and with HIF1A; the interaction promotes their degradation. Interacts with RHOA; this enhances RHOA activation and promotes cell migration. Interacts with CHRM2; the interaction regulates CHRM2 internalization. Interacts with TRPM6 (via kinase domain). Interacts with PTK2/FAK1; required for PTK2/FAK1 phosphorylation and dephosphorylation. Interacts with FLT1. Interacts with HRAS. Interacts with SLC9A5; this interaction regulates SLC9A5 cell-surface targeting and SLC9A5 activity. Interacts with SLC9A6; this interaction regulates the distribution of SLC9A6 between endosomes and the plasma membrane. Interacts with AIM2; promoting association with PP2A phosphatase and dephosphorylation of AKT1. Phosphorylated on Tyr-228 and/or Tyr-246 by SRC. This is required for binding to SRC. In terms of tissue distribution, expressed in aortic endothelial cells (EC) and the endothelium of tumor neovascularizations. Differential gene expression is displayed in the corpora lutea of the early, mid, and late stages of the ovarian cycle that are associated with progressive, active, and regressive stages of angiogenesis.

It localises to the cell membrane. The protein localises to the cytoplasm. Its subcellular location is the perinuclear region. The protein resides in the nucleus. It is found in the perikaryon. It localises to the cell projection. The protein localises to the dendrite. Scaffolding protein involved in the recruitment, assembly and/or regulation of a variety of signaling molecules. Interacts with a wide variety of proteins and plays a role in many cellular processes. Component of the 40S ribosomal subunit involved in translational repression. Involved in the initiation of the ribosome quality control (RQC), a pathway that takes place when a ribosome has stalled during translation, by promoting ubiquitination of a subset of 40S ribosomal subunits. Binds to and stabilizes activated protein kinase C (PKC), increasing PKC-mediated phosphorylation. May recruit activated PKC to the ribosome, leading to phosphorylation of EIF6. Inhibits the activity of SRC kinases including SRC, LCK and YES1. Inhibits cell growth by prolonging the G0/G1 phase of the cell cycle. Enhances phosphorylation of BMAL1 by PRKCA and inhibits transcriptional activity of the BMAL1-CLOCK heterodimer. Facilitates ligand-independent nuclear translocation of AR following PKC activation, represses AR transactivation activity and is required for phosphorylation of AR by SRC. Modulates IGF1R-dependent integrin signaling and promotes cell spreading and contact with the extracellular matrix. Involved in PKC-dependent translocation of ADAM12 to the cell membrane. Promotes the ubiquitination and proteasome-mediated degradation of proteins such as CLEC1B and HIF1A. Required for VANGL2 membrane localization, inhibits Wnt signaling, and regulates cellular polarization and oriented cell division during gastrulation. Required for PTK2/FAK1 phosphorylation and dephosphorylation. Regulates internalization of the muscarinic receptor CHRM2. Promotes apoptosis by increasing oligomerization of BAX and disrupting the interaction of BAX with the anti-apoptotic factor BCL2L. Inhibits TRPM6 channel activity. Regulates cell surface expression of some GPCRs such as TBXA2R. Plays a role in regulation of FLT1-mediated cell migration. Involved in the transport of ABCB4 from the Golgi to the apical bile canalicular membrane. Acts as an adapter for the dephosphorylation and inactivation of AKT1 by promoting recruitment of PP2A phosphatase to AKT1. The chain is Small ribosomal subunit protein RACK1 (RACK1) from Bos taurus (Bovine).